The primary structure comprises 905 residues: Isoleucine--tRNA ligase (905 aa).

Residues 56 to 66 (PYANGNIHMGT) carry the 'HIGH' region motif. Glutamate 563 serves as a coordination point for L-isoleucyl-5'-AMP. The 'KMSKS' region signature appears at 604–608 (KMSKS). Residue lysine 607 participates in ATP binding.

Belongs to the class-I aminoacyl-tRNA synthetase family. IleS type 1 subfamily. Monomer.

The protein resides in the cytoplasm. The catalysed reaction is tRNA(Ile) + L-isoleucine + ATP = L-isoleucyl-tRNA(Ile) + AMP + diphosphate. Its function is as follows. Catalyzes the attachment of isoleucine to tRNA(Ile). As IleRS can inadvertently accommodate and process structurally similar amino acids such as valine, to avoid such errors it has two additional distinct tRNA(Ile)-dependent editing activities. One activity is designated as 'pretransfer' editing and involves the hydrolysis of activated Val-AMP. The other activity is designated 'posttransfer' editing and involves deacylation of mischarged Val-tRNA(Ile). The sequence is that of Isoleucine--tRNA ligase from Pelagibacter ubique (strain HTCC1062).